The sequence spans 301 residues: Galectin-6 (301 aa).

2 Galectin domains span residues 19–149 (YKRP…INFF) and 173–301 (YVGA…YVHI).

The sequence is that of Galectin-6 (Lgals6) from Mus musculus (Mouse).